We begin with the raw amino-acid sequence, 134 residues long: Protein dpy-30 homolog (134 aa).

The tract at residues 1–81 (MEAKTDAPIS…ETNNMPTRQY (81 aa)) is disordered. Positions 31–68 (AQANPTAAPGAPPSGAIAVGQSTNPVAQQQQQPAVAKK) are enriched in low complexity. Over residues 71-81 (SETNNMPTRQY) the composition is skewed to polar residues.

The protein belongs to the dpy-30 family. As to quaternary structure, core component of several methyltransferase-containing complexes. Component of the SET1 complex, composed at least of the catalytic subunit Set1, wds/WDR5, Wdr82, Rbbp5, ash2, Cfp1/CXXC1, hcf and Dpy-30L1. Component of the MLL3/4 complex composed at least of the catalytic subunit trr, ash2, Rbbp5, Dpy-30L1, wds, hcf, ptip, Pa1, Utx, Lpt and Ncoa6. Expressed in larval brain, gonad, imaginal disk and salivary gland and in adult brain, testis, ovary and salivary gland.

It localises to the nucleus. Functionally, component of the SET1 complex that specifically di- and trimethylates 'Lys-4' of histone H3 and of the MLL3/4 complex which also methylates histone H3 'Lys-4'. Inhibits MTF-1 transcription factor activity. The chain is Protein dpy-30 homolog from Drosophila melanogaster (Fruit fly).